The chain runs to 325 residues: GMP reductase (325 aa).

C174 functions as the Thioimidate intermediate in the catalytic mechanism. An NADP(+)-binding site is contributed by 203-226 (IIADGGLRTHGDIAKSIRFGATMV).

Belongs to the IMPDH/GMPR family. GuaC type 2 subfamily.

It carries out the reaction IMP + NH4(+) + NADP(+) = GMP + NADPH + 2 H(+). In terms of biological role, catalyzes the irreversible NADPH-dependent deamination of GMP to IMP. It functions in the conversion of nucleobase, nucleoside and nucleotide derivatives of G to A nucleotides, and in maintaining the intracellular balance of A and G nucleotides. This Staphylococcus epidermidis (strain ATCC 35984 / DSM 28319 / BCRC 17069 / CCUG 31568 / BM 3577 / RP62A) protein is GMP reductase.